We begin with the raw amino-acid sequence, 307 residues long: Agmatinase (307 aa).

His-126, Asp-149, His-151, Asp-153, Asp-230, and Asp-232 together coordinate Mn(2+).

It belongs to the arginase family. Agmatinase subfamily. Requires Mn(2+) as cofactor.

The catalysed reaction is agmatine + H2O = urea + putrescine. It functions in the pathway amine and polyamine biosynthesis; putrescine biosynthesis via agmatine pathway; putrescine from agmatine: step 1/1. Its function is as follows. Catalyzes the formation of putrescine from agmatine. This is Agmatinase from Sodalis glossinidius (strain morsitans).